The primary structure comprises 497 residues: Probable malate:quinone oxidoreductase (497 aa).

This sequence belongs to the MQO family. It depends on FAD as a cofactor.

The catalysed reaction is (S)-malate + a quinone = a quinol + oxaloacetate. It functions in the pathway carbohydrate metabolism; tricarboxylic acid cycle; oxaloacetate from (S)-malate (quinone route): step 1/1. This Exiguobacterium sibiricum (strain DSM 17290 / CCUG 55495 / CIP 109462 / JCM 13490 / 255-15) protein is Probable malate:quinone oxidoreductase.